The primary structure comprises 281 residues: AB hydrolase superfamily protein YclE (281 aa).

The 239-residue stretch at 30-268 folds into the AB hydrolase-1 domain; sequence SAVYYPRLFS…SGHQPMLEEP (239 aa). S95 functions as the Nucleophile in the catalytic mechanism. Residue D232 is part of the active site. H261 serves as the catalytic Proton donor.

Belongs to the AB hydrolase superfamily.

In Bacillus subtilis (strain 168), this protein is AB hydrolase superfamily protein YclE (yclE).